The following is a 101-amino-acid chain: Aspartyl/glutamyl-tRNA(Asn/Gln) amidotransferase subunit C (101 aa).

The protein belongs to the GatC family. Heterotrimer of A, B and C subunits.

It catalyses the reaction L-glutamyl-tRNA(Gln) + L-glutamine + ATP + H2O = L-glutaminyl-tRNA(Gln) + L-glutamate + ADP + phosphate + H(+). The enzyme catalyses L-aspartyl-tRNA(Asn) + L-glutamine + ATP + H2O = L-asparaginyl-tRNA(Asn) + L-glutamate + ADP + phosphate + 2 H(+). In terms of biological role, allows the formation of correctly charged Asn-tRNA(Asn) or Gln-tRNA(Gln) through the transamidation of misacylated Asp-tRNA(Asn) or Glu-tRNA(Gln) in organisms which lack either or both of asparaginyl-tRNA or glutaminyl-tRNA synthetases. The reaction takes place in the presence of glutamine and ATP through an activated phospho-Asp-tRNA(Asn) or phospho-Glu-tRNA(Gln). In Lactococcus lactis subsp. cremoris (strain SK11), this protein is Aspartyl/glutamyl-tRNA(Asn/Gln) amidotransferase subunit C.